Here is a 546-residue protein sequence, read N- to C-terminus: Membrane protein insertase YidC (546 aa).

A helical membrane pass occupies residues 6 to 26; that stretch reads LILFIVFSFSLLLLWEAWQDK. Residues 31–56 form a disordered region; the sequence is PATRPVAGAPAGSAAPTPSTALNAPA. A compositionally biased stretch (low complexity) spans 37 to 56; it reads AGAPAGSAAPTPSTALNAPA. The next 4 membrane-spanning stretches (helical) occupy residues 351-371, 425-445, 465-482, and 494-514; these read LVGN…LALY, LPIL…LAAV, WYIL…QVKL, and IMMI…AGLV.

It belongs to the OXA1/ALB3/YidC family. Type 1 subfamily. As to quaternary structure, interacts with the Sec translocase complex via SecD. Specifically interacts with transmembrane segments of nascent integral membrane proteins during membrane integration.

It is found in the cell inner membrane. Functionally, required for the insertion and/or proper folding and/or complex formation of integral membrane proteins into the membrane. Involved in integration of membrane proteins that insert both dependently and independently of the Sec translocase complex, as well as at least some lipoproteins. Aids folding of multispanning membrane proteins. This is Membrane protein insertase YidC from Thiobacillus denitrificans (strain ATCC 25259 / T1).